The sequence spans 171 residues: Large ribosomal subunit protein uL10 (171 aa).

This sequence belongs to the universal ribosomal protein uL10 family. In terms of assembly, part of the ribosomal stalk of the 50S ribosomal subunit. The N-terminus interacts with L11 and the large rRNA to form the base of the stalk. The C-terminus forms an elongated spine to which L12 dimers bind in a sequential fashion forming a multimeric L10(L12)X complex.

In terms of biological role, forms part of the ribosomal stalk, playing a central role in the interaction of the ribosome with GTP-bound translation factors. The polypeptide is Large ribosomal subunit protein uL10 (Corynebacterium jeikeium (strain K411)).